The primary structure comprises 252 residues: 5-oxoprolinase subunit A (252 aa).

It belongs to the LamB/PxpA family. Forms a complex composed of PxpA, PxpB and PxpC.

It catalyses the reaction 5-oxo-L-proline + ATP + 2 H2O = L-glutamate + ADP + phosphate + H(+). In terms of biological role, catalyzes the cleavage of 5-oxoproline to form L-glutamate coupled to the hydrolysis of ATP to ADP and inorganic phosphate. This chain is 5-oxoprolinase subunit A, found in Mycobacterium marinum (strain ATCC BAA-535 / M).